Reading from the N-terminus, the 124-residue chain is Small ribosomal subunit protein bS6 (124 aa).

The protein belongs to the bacterial ribosomal protein bS6 family.

Functionally, binds together with bS18 to 16S ribosomal RNA. This Bordetella avium (strain 197N) protein is Small ribosomal subunit protein bS6.